A 618-amino-acid chain; its full sequence is DNA mismatch repair protein MutL (618 aa).

The segment covering 348–359 has biased composition (polar residues); that stretch reads QTDTARSPTGNF. Residues 348-400 are disordered; it reads QTDTARSPTGNFESGEVFDYPKSQLQPSHSVSSGGASLGSRSAGGSGGAYRAT. Residues 377–388 show a composition bias toward low complexity; it reads SVSSGGASLGSR.

It belongs to the DNA mismatch repair MutL/HexB family.

Functionally, this protein is involved in the repair of mismatches in DNA. It is required for dam-dependent methyl-directed DNA mismatch repair. May act as a 'molecular matchmaker', a protein that promotes the formation of a stable complex between two or more DNA-binding proteins in an ATP-dependent manner without itself being part of a final effector complex. The protein is DNA mismatch repair protein MutL of Pseudoalteromonas translucida (strain TAC 125).